Reading from the N-terminus, the 138-residue chain is Acidic phospholipase A2 RV-7 (138 aa).

An N-terminal signal peptide occupies residues 1-16; it reads MRTLWIVAVCLIGVEG. 7 cysteine pairs are disulfide-bonded: cysteine 42-cysteine 131, cysteine 44-cysteine 60, cysteine 59-cysteine 111, cysteine 65-cysteine 138, cysteine 66-cysteine 104, cysteine 73-cysteine 97, and cysteine 91-cysteine 102. Tyrosine 43, glycine 45, and glycine 47 together coordinate Ca(2+). The active site involves histidine 63. A Ca(2+)-binding site is contributed by aspartate 64. Residue aspartate 105 is part of the active site.

The protein belongs to the phospholipase A2 family. Group II subfamily. D49 sub-subfamily. As to quaternary structure, heterodimer of a weakly toxic basic protein having phospholipase A2 activity (RV-4) and a non-toxic acidic protein which inhibits its enzymatic activity but potentiates its lethal potency and neurotoxicity (RV-7). It depends on Ca(2+) as a cofactor. In terms of tissue distribution, expressed by the venom gland.

The protein resides in the secreted. The enzyme catalyses a 1,2-diacyl-sn-glycero-3-phosphocholine + H2O = a 1-acyl-sn-glycero-3-phosphocholine + a fatty acid + H(+). In terms of biological role, heterodimer: RV-4/RV-7 targets the presynaptic sites of the neuromuscular junction. Monomer: snake venom phospholipase A2 (PLA2) RV-7 that has low enzymatic activity and is not toxic. It inhibits the enzymatic activity of RV-4 in vitro but potentiates its lethal potency and neurotoxicity. It may facilitate the specific binding of RV-4 to its presynaptic binding sites, probably by acting as a chaperone, minimizing distraction and destruction of RV-4 en route to the site of action by reducing non-specific binding to muscle and other organs. PLA2 catalyzes the calcium-dependent hydrolysis of the 2-acyl groups in 3-sn-phosphoglycerides. The sequence is that of Acidic phospholipase A2 RV-7 from Daboia siamensis (Eastern Russel's viper).